A 143-amino-acid chain; its full sequence is UPF0201 protein Msed_1787 (143 aa).

Belongs to the UPF0201 family.

In Metallosphaera sedula (strain ATCC 51363 / DSM 5348 / JCM 9185 / NBRC 15509 / TH2), this protein is UPF0201 protein Msed_1787.